A 494-amino-acid polypeptide reads, in one-letter code: Glutamyl-tRNA(Gln) amidotransferase subunit A (494 aa).

Catalysis depends on charge relay system residues lysine 79 and serine 159. Serine 183 functions as the Acyl-ester intermediate in the catalytic mechanism.

The protein belongs to the amidase family. GatA subfamily. In terms of assembly, heterotrimer of A, B and C subunits.

It carries out the reaction L-glutamyl-tRNA(Gln) + L-glutamine + ATP + H2O = L-glutaminyl-tRNA(Gln) + L-glutamate + ADP + phosphate + H(+). In terms of biological role, allows the formation of correctly charged Gln-tRNA(Gln) through the transamidation of misacylated Glu-tRNA(Gln) in organisms which lack glutaminyl-tRNA synthetase. The reaction takes place in the presence of glutamine and ATP through an activated gamma-phospho-Glu-tRNA(Gln). This chain is Glutamyl-tRNA(Gln) amidotransferase subunit A, found in Bartonella henselae (strain ATCC 49882 / DSM 28221 / CCUG 30454 / Houston 1) (Rochalimaea henselae).